We begin with the raw amino-acid sequence, 339 residues long: Phenylalanine--tRNA ligase alpha subunit (339 aa).

Residue Glu254 participates in Mg(2+) binding.

Belongs to the class-II aminoacyl-tRNA synthetase family. Phe-tRNA synthetase alpha subunit type 1 subfamily. In terms of assembly, tetramer of two alpha and two beta subunits. Mg(2+) is required as a cofactor.

It is found in the cytoplasm. The enzyme catalyses tRNA(Phe) + L-phenylalanine + ATP = L-phenylalanyl-tRNA(Phe) + AMP + diphosphate + H(+). The polypeptide is Phenylalanine--tRNA ligase alpha subunit (Clostridium botulinum (strain Alaska E43 / Type E3)).